The chain runs to 521 residues: 2-isopropylmalate synthase (521 aa).

One can recognise a Pyruvate carboxyltransferase domain in the interval 5-267; it reads VIIFDTTLRD…HTNIKHQEIH (263 aa). Mn(2+)-binding residues include Asp-14, His-202, His-204, and Asn-238. Residues 392-521 form a regulatory domain region; the sequence is KLNYLSVQSG…FAQKTVMETL (130 aa).

The protein belongs to the alpha-IPM synthase/homocitrate synthase family. LeuA type 1 subfamily. In terms of assembly, homodimer. The cofactor is Mn(2+).

It localises to the cytoplasm. It catalyses the reaction 3-methyl-2-oxobutanoate + acetyl-CoA + H2O = (2S)-2-isopropylmalate + CoA + H(+). The protein operates within amino-acid biosynthesis; L-leucine biosynthesis; L-leucine from 3-methyl-2-oxobutanoate: step 1/4. In terms of biological role, catalyzes the condensation of the acetyl group of acetyl-CoA with 3-methyl-2-oxobutanoate (2-ketoisovalerate) to form 3-carboxy-3-hydroxy-4-methylpentanoate (2-isopropylmalate). This Tolumonas auensis (strain DSM 9187 / NBRC 110442 / TA 4) protein is 2-isopropylmalate synthase.